The primary structure comprises 725 residues: Another transcription unit protein (725 aa).

A compositionally biased stretch (acidic residues) spans 1 to 10 (MGSQNSDDDS). 3 disordered regions span residues 1-379 (MGSQ…PETR), 566-603 (RQAM…EGSD), and 617-725 (YKKG…SDND). Residues 11–70 (GSSGSSRSGSRSVTPQGGSAPGSQRSRRSGSGSDRSRSGSRSSRSRSGSGSPRSARSGSA) are compositionally biased toward low complexity. The span at 82-101 (RSKRSRSAHSRRSGSARSRK) shows a compositional bias: basic residues. The segment covering 104–116 (TPESPQSHRSGSL) has biased composition (polar residues). A compositionally biased stretch (low complexity) spans 117 to 140 (QSRKSGSPQSRRSGSPQSRKSGST). The segment covering 141 to 160 (HSRRSGSAHSRRSGSARSRK) has biased composition (basic residues). Phosphoserine is present on residues S175, S186, S188, and S190. Residues 206–223 (SRSRSRSRSGSRTSRSRS) show a composition bias toward basic residues. Residues 224–242 (KTGTPSPNRSRSGSASGSG) show a composition bias toward low complexity. Residues S265, S267, and S269 each carry the phosphoserine modification. T286 bears the Phosphothreonine mark. Phosphoserine occurs at positions 288, 290, and 312. A compositionally biased stretch (acidic residues) spans 306–318 (GDADDISDDEDEA). Residues 325-353 (SPVRSKSRSQSKSHSHSRSMSHSRSRSRS) show a composition bias toward basic residues. Residues 354–369 (RSRDKVESQVESAPKE) are compositionally biased toward basic and acidic residues. Residue S355 is modified to Phosphoserine. Basic residues predominate over residues 571–582 (NQHKSLPKKKKP). T593 carries the phosphothreonine modification. S595, S602, and S631 each carry phosphoserine. T632 is subject to Phosphothreonine. A phosphoserine mark is found at S635, S636, and S642. Basic and acidic residues predominate over residues 644-665 (FEARRSKKVDKAKASKALRDSD). Residues 710–725 (SGSGSGSGSGSGSDND) show a composition bias toward gly residues.

In Drosophila melanogaster (Fruit fly), this protein is Another transcription unit protein (Atu).